The following is a 371-amino-acid chain: Phosphatase IMPL1, chloroplastic (371 aa).

Residues 1–60 constitute a chloroplast transit peptide; the sequence is MGRSLIFSGNMSLRISHLPRSSLPLQNPISGRTVNRTFRYRCTRILSNSFKSTTRLQTKA. V61 is subject to N-acetylvaline. Residues E148, D165, L167, and D168 each coordinate Mg(2+). Substrate is bound at residue E148. Substrate contacts are provided by residues 167–170, 273–275, E292, and D299; these read LDGT and GAA. Residue D299 participates in Mg(2+) binding.

It belongs to the inositol monophosphatase superfamily. Mg(2+) is required as a cofactor. In terms of tissue distribution, ubiquitous. Expressed in pistil and seed endosperm.

The protein localises to the plastid. The protein resides in the chloroplast stroma. The enzyme catalyses a myo-inositol phosphate + H2O = myo-inositol + phosphate. It functions in the pathway polyol metabolism; myo-inositol biosynthesis; myo-inositol from D-glucose 6-phosphate: step 2/2. Functionally, phosphatase acting preferentially on D-myoinositol 1-phosphate (D-Ins 1-P). The chain is Phosphatase IMPL1, chloroplastic (IMPL1) from Arabidopsis thaliana (Mouse-ear cress).